The chain runs to 209 residues: uncharacterized protein (209 aa).

3 helical membrane passes run 26–48 (LRYF…GLAV), 147–169 (AYLV…PFLM), and 179–196 (IVAA…VYLL).

The protein localises to the cell membrane. This is an uncharacterized protein from Archaeoglobus fulgidus (strain ATCC 49558 / DSM 4304 / JCM 9628 / NBRC 100126 / VC-16).